Reading from the N-terminus, the 403-residue chain is Golgin-45 (403 aa).

Positions 1–63 (MEKMTTLKSS…PRKKVSSDSP (63 aa)) are disordered. A Tankyrase-binding motif motif is present at residues 22-26 (RGAGD). Position 53 is a phosphoserine (Ser53). The stretch at 123–216 (RKELSEVKKV…QLERMSIQCD (94 aa)) forms a coiled coil. Ser356 is subject to Phosphoserine. The interval 397–403 (QGELIAL) is essential for interaction with GORASP2.

Interacts with GORASP2. Interacts with the GTP-bound form of RAB2, but not with other Golgi Rab proteins. Identified in a complex with RAB2 and GORASP2. In terms of processing, ADP-ribosylated by tankyrase TNKS and TNKS2. Poly-ADP-ribosylated protein is recognized by RNF146, followed by ubiquitination. Ubiquitinated by RNF146 when poly-ADP-ribosylated, leading to its degradation.

Its subcellular location is the golgi apparatus membrane. Its function is as follows. Required for normal Golgi structure and for protein transport from the endoplasmic reticulum (ER) through the Golgi apparatus to the cell surface. The polypeptide is Golgin-45 (Blzf1) (Mus musculus (Mouse)).